The chain runs to 269 residues: Expansin-A32 (269 aa).

Residues 1–25 (MWCTWALGRVVLAVVFLVALAAGDA) form the signal peptide. Residues 60–174 (DGACGYKDTS…RRVPCVKVGG (115 aa)) enclose the Expansin-like EG45 domain. An Expansin-like CBD domain is found at 184 to 264 (YFNLVMVSNV…DWQFGVTYQA (81 aa)).

Belongs to the expansin family. Expansin A subfamily.

It is found in the secreted. The protein resides in the cell wall. It localises to the membrane. In terms of biological role, may cause loosening and extension of plant cell walls by disrupting non-covalent bonding between cellulose microfibrils and matrix glucans. No enzymatic activity has been found. May be required for rapid internodal elongation in deepwater rice during submergence. This is Expansin-A32 (EXPA32) from Oryza sativa subsp. japonica (Rice).